Reading from the N-terminus, the 466-residue chain is SVGFKAGVKDYKLTYYTPDYETKDTDILAAFRMSPQPGVPAEEAGAAVAAESSTGTWTTVWTDGLTSLDRYKGRCYQIEPVAGEENQYIAYVAYPLDLFEEGSVTNMFTSIVGNVFGFKALRALRLEDLRIPPAYVKTFQGPPHGIQVERDKLNKYGRPLLGCTIKPKLGLSAKNYGRAVYECLRGGLDFTKDDENVNSQPFMRWRDRFLFCAEAIYKAQAETGEIKGHYLNATAGTCEEMMKRAVFARELGVPIVMHDYLTGGFTANTSLAHYCRDNGLLLHIHRAMHAVIDRQKNHGIHFRVLAKALRMSGGDHIHSGTVVGKLEGERDITLGFVDLLRDDFIEKDRSRGIFFTQDWVSLPGVLPVASGGIHVWHMPALTEIFGDDSVLQFGGGTLGHPWGNAPGAVANRVALEACVQARNEGRDLASEGNAIIREASKWSPELAAACEVWKEIKFEFPAMDTL.

An N6,N6,N6-trimethyllysine modification is found at lysine 5. Positions 114 and 164 each coordinate substrate. Lysine 166 serves as the catalytic Proton acceptor. Lysine 168 provides a ligand contact to substrate. Lysine 192, aspartate 194, and glutamate 195 together coordinate Mg(2+). The residue at position 192 (lysine 192) is an N6-carboxylysine. The Proton acceptor role is filled by histidine 285. 3 residues coordinate substrate: arginine 286, histidine 318, and serine 370.

Belongs to the RuBisCO large chain family. Type I subfamily. As to quaternary structure, heterohexadecamer of 8 large chains and 8 small chains; disulfide-linked. The disulfide link is formed within the large subunit homodimers. The cofactor is Mg(2+). The disulfide bond which can form in the large chain dimeric partners within the hexadecamer appears to be associated with oxidative stress and protein turnover.

The protein localises to the plastid. It is found in the chloroplast. It catalyses the reaction 2 (2R)-3-phosphoglycerate + 2 H(+) = D-ribulose 1,5-bisphosphate + CO2 + H2O. The enzyme catalyses D-ribulose 1,5-bisphosphate + O2 = 2-phosphoglycolate + (2R)-3-phosphoglycerate + 2 H(+). Its function is as follows. RuBisCO catalyzes two reactions: the carboxylation of D-ribulose 1,5-bisphosphate, the primary event in carbon dioxide fixation, as well as the oxidative fragmentation of the pentose substrate in the photorespiration process. Both reactions occur simultaneously and in competition at the same active site. The sequence is that of Ribulose bisphosphate carboxylase large chain from Tropaeolum majus (Common nasturtium).